The chain runs to 796 residues: Kinesin-like protein KIF3C (796 aa).

Residues 10–367 (ALKVVARCRP…LRFANRAKNI (358 aa)) form the Kinesin motor domain. 97-104 (GQTGTGKT) contacts ATP. 3 disordered regions span residues 251–292 (ERQN…PKEA), 397–421 (EKKGMLGKRPRRKSSRRKKAVSAPA), and 754–796 (PSTS…VDHD). Positions 270–284 (AGGGGGGGGTSGSGS) are enriched in gly residues. A coiled-coil region spans residues 378–632 (KDTLLREFQE…NEQTRELKLK (255 aa)). Residues 401 to 416 (MLGKRPRRKSSRRKKA) show a composition bias toward basic residues. A globular region spans residues 633-793 (YLIIENFIPP…SAPLHPATVV (161 aa)).

This sequence belongs to the TRAFAC class myosin-kinesin ATPase superfamily. Kinesin family. Kinesin II subfamily. Heterodimer of KIF3A and KIF3C.

The protein localises to the cytoplasm. Its subcellular location is the cytoskeleton. Microtubule-based anterograde translocator for membranous organelles. This chain is Kinesin-like protein KIF3C (Kif3c), found in Rattus norvegicus (Rat).